Here is a 426-residue protein sequence, read N- to C-terminus: Phosphomethylpyrimidine synthase (426 aa).

Substrate contacts are provided by residues Asn-65, Met-94, Tyr-123, His-162, 184-186 (SRG), 225-228 (DGMR), and Glu-264. Zn(2+) is bound at residue His-268. Tyr-291 is a binding site for substrate. His-332 lines the Zn(2+) pocket. [4Fe-4S] cluster is bound by residues Cys-408, Cys-411, and Cys-415.

This sequence belongs to the ThiC family. [4Fe-4S] cluster serves as cofactor.

It carries out the reaction 5-amino-1-(5-phospho-beta-D-ribosyl)imidazole + S-adenosyl-L-methionine = 4-amino-2-methyl-5-(phosphooxymethyl)pyrimidine + CO + 5'-deoxyadenosine + formate + L-methionine + 3 H(+). It participates in cofactor biosynthesis; thiamine diphosphate biosynthesis. Its function is as follows. Catalyzes the synthesis of the hydroxymethylpyrimidine phosphate (HMP-P) moiety of thiamine from aminoimidazole ribotide (AIR) in a radical S-adenosyl-L-methionine (SAM)-dependent reaction. The polypeptide is Phosphomethylpyrimidine synthase (Methanococcus maripaludis (strain C5 / ATCC BAA-1333)).